Here is a 237-residue protein sequence, read N- to C-terminus: Ribosomal RNA small subunit methyltransferase G (237 aa).

S-adenosyl-L-methionine-binding positions include Gly-78, Phe-83, 129–130 (AE), and Arg-148. The interval 218 to 237 (KKETPNKYPRKAGMPNKRPL) is disordered.

This sequence belongs to the methyltransferase superfamily. RNA methyltransferase RsmG family.

The protein localises to the cytoplasm. Its function is as follows. Specifically methylates the N7 position of a guanine in 16S rRNA. This is Ribosomal RNA small subunit methyltransferase G from Streptococcus gordonii (strain Challis / ATCC 35105 / BCRC 15272 / CH1 / DL1 / V288).